The following is a 197-amino-acid chain: ATP-dependent Clp protease proteolytic subunit 1 (197 aa).

The Nucleophile role is filled by S100. The active site involves H125.

The protein belongs to the peptidase S14 family. In terms of assembly, fourteen ClpP subunits assemble into 2 heptameric rings which stack back to back to give a disk-like structure with a central cavity, resembling the structure of eukaryotic proteasomes.

Its subcellular location is the cytoplasm. The enzyme catalyses Hydrolysis of proteins to small peptides in the presence of ATP and magnesium. alpha-casein is the usual test substrate. In the absence of ATP, only oligopeptides shorter than five residues are hydrolyzed (such as succinyl-Leu-Tyr-|-NHMec, and Leu-Tyr-Leu-|-Tyr-Trp, in which cleavage of the -Tyr-|-Leu- and -Tyr-|-Trp bonds also occurs).. Functionally, cleaves peptides in various proteins in a process that requires ATP hydrolysis. Has a chymotrypsin-like activity. Plays a major role in the degradation of misfolded proteins. In Gloeobacter violaceus (strain ATCC 29082 / PCC 7421), this protein is ATP-dependent Clp protease proteolytic subunit 1.